Here is a 144-residue protein sequence, read N- to C-terminus: uncharacterized protein (144 aa).

Positions 1 to 22 are cleaved as a signal peptide; that stretch reads MCTDVAFFSLDCLATWLGGVCS.

This is an uncharacterized protein from Saccharomyces cerevisiae (strain ATCC 204508 / S288c) (Baker's yeast).